We begin with the raw amino-acid sequence, 241 residues long: Nuclear receptor-interacting protein 3 (241 aa).

The chain is Nuclear receptor-interacting protein 3 (NRIP3) from Homo sapiens (Human).